The following is a 185-amino-acid chain: Homeobox expressed in ES cells 1 (185 aa).

A disordered region spans residues 32–69 (KKDCTTSVRPHRPWTDTCGDSEKGGNPPLHAPDLPSET). The homeobox DNA-binding region spans 108–167 (GRRPRTAFTQNQVEVLENVFRVNCYPGIDIREDLAQKLNLEEDRIQIWFQNRRAKMKRSR).

Belongs to the ANF homeobox family. In terms of assembly, can form heterodimers with PROP1 in binding to DNA Interacts with TLE1. High levels found in the embryonic liver, lower level expression seen in the viscera, amnion and yolk sac.

The protein resides in the nucleus. Functionally, required for the normal development of the forebrain, eyes and other anterior structures such as the olfactory placodes and pituitary gland. Possible transcriptional repressor. Binds to the palindromic PIII sequence, 5'-AGCTTGAGTCTAATTGAATTAACTGTAC-3'. HESX1 and PROP1 bind as heterodimers on this palindromic site, and, in vitro, HESX1 can antagonize PROP1 activation. The protein is Homeobox expressed in ES cells 1 (Hesx1) of Mus musculus (Mouse).